A 340-amino-acid chain; its full sequence is Hydroxyurea phosphotransferase (340 aa).

The active-site Proton acceptor is the Asp240.

The protein belongs to the aminoglycoside phosphotransferase family.

Its function is as follows. Potential phosphotransferase that inactivates hydroxyurea by phosphorylation of the hydroxy group in the hydroxylamine moiety. The polypeptide is Hydroxyurea phosphotransferase (hur) (Kitasatospora aureofaciens (Streptomyces aureofaciens)).